The sequence spans 119 residues: Large ribosomal subunit protein bL20 (119 aa).

The protein belongs to the bacterial ribosomal protein bL20 family.

Binds directly to 23S ribosomal RNA and is necessary for the in vitro assembly process of the 50S ribosomal subunit. It is not involved in the protein synthesizing functions of that subunit. The sequence is that of Large ribosomal subunit protein bL20 from Metamycoplasma arthritidis (strain 158L3-1) (Mycoplasma arthritidis).